Consider the following 264-residue polypeptide: Small ribosomal subunit protein uS3 (264 aa).

A KH type-2 domain is found at Val39–Arg107. The tract at residues Asn211–Glu264 is disordered. Positions Asp221 to Gly239 are enriched in basic and acidic residues. Over residues Arg240–Ala251 the composition is skewed to gly residues.

It belongs to the universal ribosomal protein uS3 family. Part of the 30S ribosomal subunit. Forms a tight complex with proteins S10 and S14.

Binds the lower part of the 30S subunit head. Binds mRNA in the 70S ribosome, positioning it for translation. The sequence is that of Small ribosomal subunit protein uS3 from Cupriavidus pinatubonensis (strain JMP 134 / LMG 1197) (Cupriavidus necator (strain JMP 134)).